The sequence spans 142 residues: Ribosome-binding factor A (142 aa).

Residues 118 to 142 form a disordered region; that stretch reads DKNGDAEVDDTQVDDEPSVDSEKGE. The segment covering 123–136 has biased composition (acidic residues); the sequence is AEVDDTQVDDEPSV.

The protein belongs to the RbfA family. Monomer. Binds 30S ribosomal subunits, but not 50S ribosomal subunits or 70S ribosomes.

It is found in the cytoplasm. Its function is as follows. One of several proteins that assist in the late maturation steps of the functional core of the 30S ribosomal subunit. Associates with free 30S ribosomal subunits (but not with 30S subunits that are part of 70S ribosomes or polysomes). Required for efficient processing of 16S rRNA. May interact with the 5'-terminal helix region of 16S rRNA. The polypeptide is Ribosome-binding factor A (Colwellia psychrerythraea (strain 34H / ATCC BAA-681) (Vibrio psychroerythus)).